We begin with the raw amino-acid sequence, 367 residues long: Aflatoxin B1 aldehyde reductase member 2 (367 aa).

The segment covering 1 to 31 has biased composition (low complexity); it reads MLRAASRAVGRAAVRSAQRSGTSVGRPLAMS. Residues 1 to 45 form a disordered region; that stretch reads MLRAASRAVGRAAVRSAQRSGTSVGRPLAMSRPPPPRAASGAPLR. The transit peptide at 1 to 46 directs the protein to the mitochondrion; the sequence is MLRAASRAVGRAAVRSAQRSGTSVGRPLAMSRPPPPRAASGAPLRP. Serine 40 carries the phosphoserine modification. Threonine 48 is subject to Phosphothreonine. Position 80 (aspartate 80) interacts with NADP(+). Tyrosine 85 functions as the Proton donor in the catalytic mechanism. At lysine 136 the chain carries N6-acetyllysine. Residue histidine 149 participates in substrate binding. NADP(+) is bound by residues 179-180, glutamine 205, 234-244, and arginine 258; these read SN and NPLAGGLLTGK. An N6-succinyllysine modification is found at lysine 244. Substrate-binding residues include tyrosine 268 and arginine 271. 326 to 334 contributes to the NADP(+) binding site; that stretch reads SSLEQLEQN. Residue arginine 367 participates in substrate binding.

It belongs to the aldo/keto reductase family. Aldo/keto reductase 2 subfamily. As to quaternary structure, homodimer. In terms of tissue distribution, expressed in liver, kidney, testis and brain with low levels in skeletal muscle, spleen, heart and lung.

It localises to the mitochondrion. The protein resides in the golgi apparatus. The protein localises to the cytoplasm. It carries out the reaction 4-hydroxybutanoate + NADP(+) = succinate semialdehyde + NADPH + H(+). Inhibited by citrate, succinate and tartrate. Functionally, catalyzes the NADPH-dependent reduction of succinic semialdehyde to gamma-hydroxybutyrate. May have an important role in producing the neuromodulator gamma-hydroxybutyrate (GHB). Has broad substrate specificity. Can reduce the dialdehyde protein-binding form of aflatoxin B1 (AFB1) to the non-binding AFB1 dialcohol. May be involved in protection of liver against the toxic and carcinogenic effects of AFB1, a potent hepatocarcinogen. In Mus musculus (Mouse), this protein is Aflatoxin B1 aldehyde reductase member 2.